The primary structure comprises 415 residues: Queuine tRNA-ribosyltransferase accessory subunit 2 (415 aa).

The Zn(2+) site is built by Cys351, Cys353, Cys356, and His382.

The protein belongs to the queuine tRNA-ribosyltransferase family. QTRT2 subfamily. Heterodimer of a catalytic subunit QTRT1 and an accessory subunit QTRT2. The cofactor is Zn(2+).

The protein resides in the cytoplasm. It localises to the mitochondrion outer membrane. In terms of biological role, non-catalytic subunit of the queuine tRNA-ribosyltransferase (TGT) that catalyzes the base-exchange of a guanine (G) residue with queuine (Q) at position 34 (anticodon wobble position) in tRNAs with GU(N) anticodons (tRNA-Asp, -Asn, -His and -Tyr), resulting in the hypermodified nucleoside queuosine (7-(((4,5-cis-dihydroxy-2-cyclopenten-1-yl)amino)methyl)-7-deazaguanosine). This is Queuine tRNA-ribosyltransferase accessory subunit 2 from Pongo abelii (Sumatran orangutan).